Consider the following 89-residue polypeptide: ATP synthase subunit e, mitochondrial (89 aa).

Position 1 is an N-acetylserine (Ser-1). The helical transmembrane segment at 8–25 (YSSLAAGIVYGAYHTYTL) threads the bilayer.

In terms of assembly, F-type ATP synthases have 2 components, the catalytic core F(1) and the membrane-embedded component F(0), linked together by a central stalk and a peripheral stalk. The central stalk, also called rotor shaft, is often seen as part of F(1). The peripheral stalk is seen as part of F(0). F(0) contains the membrane channel next to the rotor. F-type ATP synthases form dimers but each monomer functions independently in ATP generation. The dimer consists of 18 different polypeptides: ATP1 (subunit alpha, part of F(1), 3 molecules per monomer), ATP2 (subunit beta, part of F(1), 3 molecules per monomer), ATP3 (subunit gamma, part of the central stalk), ATP4 (subunit b, part of the peripheral stalk), ATP5/OSCP (subunit 5/OSCP, part of the peripheral stalk), ATP6 (subunit a, part of the peripheral stalk), ATP7 (subunit d, part of the peripheral stalk), ATP8 (subunit 8, part of the peripheral stalk), OLI1 (subunit c, part of the rotor, 10 molecules per monomer), ATP14 (subunit h, part of the peripheral stalk), ATP15 (subunit epsilon, part of the central stalk), ATP16 (subunit delta, part of the central stalk), ATP17 (subunit f, part of the peripheral stalk), ATP18 (subunit i/j, part of the peripheral stalk). Dimer-specific subunits are ATP19 (subunit k, at interface between monomers), ATP20 (subunit g, at interface between monomers), TIM11 (subunit e, at interface between monomers). Also contains subunit L.

The protein localises to the mitochondrion inner membrane. Functionally, mitochondrial membrane ATP synthase (F(1)F(0) ATP synthase or Complex V) produces ATP from ADP in the presence of a proton gradient across the membrane which is generated by electron transport complexes of the respiratory chain. F-type ATP synthases consist of two structural domains, F(1) - containing the extramembraneous catalytic core, and F(0) - containing the membrane proton channel, linked together by a central stalk and a peripheral stalk. During catalysis, ATP synthesis in the catalytic domain of F(1) is coupled via a rotary mechanism of the central stalk subunits to proton translocation. Part of the complex F(0) domain. Minor subunit located with subunit a/ATP6 in the membrane. Together with subunit g/ATP20, probably contributes to membrane curvature at the site of the ATP synthase dimer, ultimately contributing to formation of cristae. The protein is ATP synthase subunit e, mitochondrial of Pichia angusta (Yeast).